Here is a 397-residue protein sequence, read N- to C-terminus: 16-O-methyltransferase bsc6 (397 aa).

An S-adenosyl-L-methionine-binding site is contributed by Asp262. Residue His302 is the Proton acceptor of the active site.

This sequence belongs to the class I-like SAM-binding methyltransferase superfamily. Cation-independent O-methyltransferase family. Requires S-adenosyl-L-methionine as cofactor.

Its pathway is mycotoxin biosynthesis. Its function is as follows. 16-O-methyltransferase; part of the gene cluster that mediates the biosynthesis of the diterpene glucoside brassicicene C. In the first step of the brassicicene C biosynthesis, the bifunctional diterpene synthase bsc8 that possesses both prenyl transferase and terpene cyclase activity, converts isopentenyl diphosphate and dimethylallyl diphosphate into geranylgeranyl diphosphate (GGDP) that is further converted into fusicocca-2,10(14)-diene, the first precursor for brassicicene C. Fusicocca-2,10(14)-diene is then substrate of cytochrome P450 monooxygenase bsc1 for hydroxylation at the C-8 position. Oxidation at C-16 position to aldehyde is then catalyzed by the cytochrome P450 monooyxygenase bsc7, yielding fusicocca-2,10(14)-diene-8-beta,16-diol. Follows the isomerization of the double bond and reduction of aldehyde to alcohol catalyzed by the short-chain dehydrogenase/reductase bsc3 to yield the diol compound fusicocca-1,10(14)-diene-8 beta,16-diol. The next step is the oxidation at the C-3 position of fusicocca-2,10(14)-diene-8-beta,16-diol catalyzed by the alpha-ketoglutarate dependent dioxygenase bsc9, to produce a triol compound. Methylation of the hydroxy group at position 16 is performed by the methyltransferase bsc6. 16-O-methylation is followed by oxidation at the C-13 position to ketone and an alkyl shift of the methyl group leads to brassicicene C. Although the probable acetyltransferase bsc4 is included in the gene cluster, no acetylation reactions are necessary for brassicicene C biosynthesis. However, the fact that brassicicene E, which is a structurally related compound having an acetoxy group at position 12, was previously isolated from another strain of A.brassicicola suggests that the ATCC 96836 strain might also produce a small amount of brassicicene E. In Alternaria brassicicola (Dark leaf spot agent), this protein is 16-O-methyltransferase bsc6.